We begin with the raw amino-acid sequence, 301 residues long: Homoserine O-acetyltransferase (301 aa).

Cys142 functions as the Acyl-thioester intermediate in the catalytic mechanism. Substrate contacts are provided by Lys163 and Ser192. The active-site Proton acceptor is the His235. Residue Glu237 is part of the active site. Arg249 contributes to the substrate binding site.

It belongs to the MetA family.

The protein resides in the cytoplasm. The enzyme catalyses L-homoserine + acetyl-CoA = O-acetyl-L-homoserine + CoA. It participates in amino-acid biosynthesis; L-methionine biosynthesis via de novo pathway; O-acetyl-L-homoserine from L-homoserine: step 1/1. Functionally, transfers an acetyl group from acetyl-CoA to L-homoserine, forming acetyl-L-homoserine. The sequence is that of Homoserine O-acetyltransferase from Bacillus anthracis (strain A0248).